Here is a 744-residue protein sequence, read N- to C-terminus: Putative pre-mRNA-splicing factor ATP-dependent RNA helicase DHX32 (744 aa).

Met-1 carries the N-acetylmethionine modification. The tract at residues 1–28 (MDEEELDHPNASPEKRYFPESLDSSDGD) is disordered. The Helicase ATP-binding domain occupies 72 to 270 (MESLLQNQVV…RLIFEIHRSG (199 aa)). 85–92 (GDSKCGKS) is an ATP binding site. Residues 185 to 188 (DDVH) carry the DEAH box motif. The Helicase C-terminal domain occupies 258 to 438 (SVIRLIFEIH…SMVLFMKRVD (181 aa)).

Belongs to the DEAD box helicase family. DEAH subfamily.

Its subcellular location is the nucleus. The protein localises to the mitochondrion. The enzyme catalyses ATP + H2O = ADP + phosphate + H(+). The sequence is that of Putative pre-mRNA-splicing factor ATP-dependent RNA helicase DHX32 (Dhx32) from Mus musculus (Mouse).